Here is a 151-residue protein sequence, read N- to C-terminus: MTKIYIDGDACPVKDEVFKVAGRYGLAVTVVGNAWLRLPQDPMITMIVVPEGPDAADDRIAELIEPGDICITNDIPLGSRCLIKRALVLRPNGKPMTENSIGDALATRDLMNTLREIGTMTGGPPPFAKADRSRFLSALDTMVHQAKRVVP.

This sequence belongs to the UPF0178 family.

This chain is UPF0178 protein amb2838, found in Paramagnetospirillum magneticum (strain ATCC 700264 / AMB-1) (Magnetospirillum magneticum).